A 323-amino-acid polypeptide reads, in one-letter code: Magnesium transporter NIPA1 (323 aa).

Topologically, residues 1 to 21 (MGTAAAAAAAGEGARGPSPAA) are extracellular. A helical transmembrane segment spans residues 22-42 (VSLGLGVAVVSSLVNGSTFVL). Residues 43 to 60 (QKKGIVRAKRRGTSYLTD) are Cytoplasmic-facing. Residues 61–81 (IVWWAGTIAMAVGQIGNFLAY) traverse the membrane as a helical segment. Residue threonine 82 is a topological domain, extracellular. The chain crosses the membrane as a helical span at residues 83–103 (AVPTVLVTPLGALGVPFGSIL). Residues 104–111 (ASYLLKEK) are Cytoplasmic-facing. Residues 112 to 132 (LNILGKLGCLLSCAGSVVLII) form a helical membrane-spanning segment. At 133–153 (HSPKSESVTTQAELEEKLTNP) the chain is on the extracellular side. A helical transmembrane segment spans residues 154-174 (VFVGYLCIVLLMLLLLIFWIA). The Cytoplasmic portion of the chain corresponds to 175–177 (PAH). A helical membrane pass occupies residues 178-198 (GPTNIMVYISICSLLGSFTVP). Topologically, residues 199-218 (STKGIGLAAQDILHNNPSSQ) are extracellular. The helical transmembrane segment at 219-239 (RALCLCLVLLAVLGCSIIVQF) threads the bilayer. The Cytoplasmic portion of the chain corresponds to 240–253 (RYINKALECFDSSV). Residues 254-274 (FGAIYYVVFTTLVLLASAILF) traverse the membrane as a helical segment. Topologically, residues 275–284 (REWSNVGLVD) are extracellular. The chain crosses the membrane as a helical span at residues 285-305 (FLGMACGFTTVSVGIVLIQVF). Residues 306–323 (KEFNFNLGEMNKSNMKTD) lie on the Cytoplasmic side of the membrane.

This sequence belongs to the NIPA family. As to quaternary structure, homodimer. Widely expressed. Predominantly expressed in neuronal tissues. Brain, heart, kidney, liver and colon (at protein level).

It localises to the cell membrane. The protein resides in the early endosome. It carries out the reaction Mg(2+)(in) = Mg(2+)(out). Functionally, acts as a Mg(2+) transporter. Can also transport other divalent cations such as Fe(2+), Sr(2+), Ba(2+), Zn(2+) and Co(2+) but to a much less extent than Mg(2+). The protein is Magnesium transporter NIPA1 (Nipa1) of Mus musculus (Mouse).